Here is an 89-residue protein sequence, read N- to C-terminus: Small ribosomal subunit protein bS20 (89 aa).

This sequence belongs to the bacterial ribosomal protein bS20 family.

Functionally, binds directly to 16S ribosomal RNA. The sequence is that of Small ribosomal subunit protein bS20 from Phenylobacterium zucineum (strain HLK1).